A 364-amino-acid polypeptide reads, in one-letter code: Aminomethyltransferase (364 aa).

Belongs to the GcvT family. As to quaternary structure, the glycine cleavage system is composed of four proteins: P, T, L and H.

It carries out the reaction N(6)-[(R)-S(8)-aminomethyldihydrolipoyl]-L-lysyl-[protein] + (6S)-5,6,7,8-tetrahydrofolate = N(6)-[(R)-dihydrolipoyl]-L-lysyl-[protein] + (6R)-5,10-methylene-5,6,7,8-tetrahydrofolate + NH4(+). Its function is as follows. The glycine cleavage system catalyzes the degradation of glycine. This Shigella dysenteriae serotype 1 (strain Sd197) protein is Aminomethyltransferase.